The sequence spans 217 residues: MHDQIIPCGMLVAIEGIDGAGKTTLARSLALKLRGVGLETVVSKEPTNGPWGTLLRQSAVTGRFSPEEEVDVLLRDRRQHVEDLIVPMIGRGAVVILDRYFPSMVAYQGAAGLPVDALLEANAFAPRPDVLLLLDVPPVIGLQRIWERGSTPNHFETTENLSRCRDIFLALELPSKRVIDATANAETVFSAALGLVMEVLRVRLGALGAVVLERLAG.

An ATP-binding site is contributed by glycine 16–threonine 23.

It belongs to the thymidylate kinase family.

It catalyses the reaction dTMP + ATP = dTDP + ADP. Functionally, phosphorylation of dTMP to form dTDP in both de novo and salvage pathways of dTTP synthesis. The sequence is that of Thymidylate kinase from Xylella fastidiosa (strain M23).